The sequence spans 682 residues: Protein SYG1 homolog (682 aa).

Residues M1–D219 enclose the SPX domain. At M1 to R274 the chain is on the cytoplasmic side. Residues F275–A295 traverse the membrane as a helical segment. The Extracellular segment spans residues T296–S300. A helical membrane pass occupies residues Y301–L321. The Cytoplasmic segment spans residues D322–R348. The chain crosses the membrane as a helical span at residues Q349–M369. Over R370–T377 the chain is Extracellular. Residues I378 to V398 form a helical membrane-spanning segment. The Cytoplasmic portion of the chain corresponds to P399 to Y406. Residues L407 to F424 traverse the membrane as a helical segment. Topologically, residues Q425 to D426 are extracellular. A helical transmembrane segment spans residues F427 to F447. Residues C448 to R525 lie on the Cytoplasmic side of the membrane. Positions L459–S654 constitute an EXS domain. A helical transmembrane segment spans residues V526–M546. Residues D547 to P571 lie on the Extracellular side of the membrane. The helical transmembrane segment at Y572–F592 threads the bilayer. Topologically, residues P593–S682 are cytoplasmic. A disordered region spans residues S659–S682. Acidic residues predominate over residues D665–S682.

The protein belongs to the SYG1 (TC 2.A.94) family.

It is found in the cell membrane. May function in G-protein coupled signal transduction. In Schizosaccharomyces pombe (strain 972 / ATCC 24843) (Fission yeast), this protein is Protein SYG1 homolog.